The following is a 387-amino-acid chain: Probable 1-alkyl-2-acetylglycerophosphocholine esterase (387 aa).

The first 17 residues, 1–17, serve as a signal peptide directing secretion; that stretch reads MLVQGTIICALVANAIA. 2 N-linked (GlcNAc...) asparagine glycosylation sites follow: Asn-51 and Asn-141. Residue Ser-227 is the Nucleophile of the active site. The Charge relay system role is filled by Asp-250. A glycan (N-linked (GlcNAc...) asparagine) is linked at Asn-283. Residue His-313 is the Charge relay system of the active site.

This sequence belongs to the AB hydrolase superfamily. Lipase family.

The protein resides in the secreted. It carries out the reaction a 1-O-alkyl-2-acetyl-sn-glycero-3-phosphocholine + H2O = a 1-O-alkyl-sn-glycero-3-phosphocholine + acetate + H(+). In Arthroderma benhamiae (strain ATCC MYA-4681 / CBS 112371) (Trichophyton mentagrophytes), this protein is Probable 1-alkyl-2-acetylglycerophosphocholine esterase.